Reading from the N-terminus, the 299-residue chain is Kruppel-like factor 2 (299 aa).

Disordered stretches follow at residues 19–38 (YQNA…SHHH) and 146–189 (YSFS…RRDK). Residues 23-38 (HHQHHQQHYHQQSHHH) show a composition bias toward basic residues. Basic and acidic residues predominate over residues 153–180 (SGKDEEDPRIPLKDRGRVYHPQSTEKPK). C2H2-type zinc fingers lie at residues 198–222 (HKCF…ERVH), 228–252 (YPCE…YRKH), and 258–280 (FACK…MKRH).

This sequence belongs to the krueppel C2H2-type zinc-finger protein family. As to expression, expressed predominantly in intestine.

The protein localises to the nucleus. Probable transcription factor which regulates lipid metabolism. The polypeptide is Kruppel-like factor 2 (Caenorhabditis elegans).